The primary structure comprises 207 residues: Large ribosomal subunit protein bL25 (207 aa).

The interval 1-20 (MANHQIKAQRRKDEGKGASR) is disordered.

Belongs to the bacterial ribosomal protein bL25 family. CTC subfamily. In terms of assembly, part of the 50S ribosomal subunit; part of the 5S rRNA/L5/L18/L25 subcomplex. Contacts the 5S rRNA. Binds to the 5S rRNA independently of L5 and L18.

This is one of the proteins that binds to the 5S RNA in the ribosome where it forms part of the central protuberance. This is Large ribosomal subunit protein bL25 from Xylella fastidiosa (strain M12).